The sequence spans 136 residues: Large ribosomal subunit protein eL27B (136 aa).

This sequence belongs to the eukaryotic ribosomal protein eL27 family. Component of the large ribosomal subunit (LSU). Mature yeast ribosomes consist of a small (40S) and a large (60S) subunit. The 40S small subunit contains 1 molecule of ribosomal RNA (18S rRNA) and 33 different proteins (encoded by 57 genes). The large 60S subunit contains 3 rRNA molecules (25S, 5.8S and 5S rRNA) and 46 different proteins (encoded by 81 genes).

It localises to the cytoplasm. Component of the ribosome, a large ribonucleoprotein complex responsible for the synthesis of proteins in the cell. The small ribosomal subunit (SSU) binds messenger RNAs (mRNAs) and translates the encoded message by selecting cognate aminoacyl-transfer RNA (tRNA) molecules. The large subunit (LSU) contains the ribosomal catalytic site termed the peptidyl transferase center (PTC), which catalyzes the formation of peptide bonds, thereby polymerizing the amino acids delivered by tRNAs into a polypeptide chain. The nascent polypeptides leave the ribosome through a tunnel in the LSU and interact with protein factors that function in enzymatic processing, targeting, and the membrane insertion of nascent chains at the exit of the ribosomal tunnel. The chain is Large ribosomal subunit protein eL27B from Saccharomyces cerevisiae (strain ATCC 204508 / S288c) (Baker's yeast).